We begin with the raw amino-acid sequence, 554 residues long: CTP synthase (554 aa).

An amidoligase domain region spans residues 1 to 279; sequence MSQPRAEHVT…DAFLIRRLDL (279 aa). Serine 21 is a binding site for CTP. Position 21 (serine 21) interacts with UTP. ATP contacts are provided by residues 22–27 and aspartate 79; that span reads SLGKGL. Residues aspartate 79 and glutamate 153 each coordinate Mg(2+). Residues 160–162, 200–205, and lysine 236 each bind CTP; these read DIE and KTKPTQ. Residues 200-205 and lysine 236 contribute to the UTP site; that span reads KTKPTQ. In terms of domain architecture, Glutamine amidotransferase type-1 spans 304-551; that stretch reads TVALVGKYID…VKAGLKHKND (248 aa). Glycine 367 is an L-glutamine binding site. Catalysis depends on cysteine 394, which acts as the Nucleophile; for glutamine hydrolysis. Residues 395–398, glutamate 417, and arginine 478 contribute to the L-glutamine site; that span reads LGLQ. Residues histidine 524 and glutamate 526 contribute to the active site.

The protein belongs to the CTP synthase family. As to quaternary structure, homotetramer.

It catalyses the reaction UTP + L-glutamine + ATP + H2O = CTP + L-glutamate + ADP + phosphate + 2 H(+). The catalysed reaction is L-glutamine + H2O = L-glutamate + NH4(+). The enzyme catalyses UTP + NH4(+) + ATP = CTP + ADP + phosphate + 2 H(+). Its pathway is pyrimidine metabolism; CTP biosynthesis via de novo pathway; CTP from UDP: step 2/2. Allosterically activated by GTP, when glutamine is the substrate; GTP has no effect on the reaction when ammonia is the substrate. The allosteric effector GTP functions by stabilizing the protein conformation that binds the tetrahedral intermediate(s) formed during glutamine hydrolysis. Inhibited by the product CTP, via allosteric rather than competitive inhibition. Its function is as follows. Catalyzes the ATP-dependent amination of UTP to CTP with either L-glutamine or ammonia as the source of nitrogen. Regulates intracellular CTP levels through interactions with the four ribonucleotide triphosphates. The chain is CTP synthase from Corynebacterium kroppenstedtii (strain DSM 44385 / JCM 11950 / CIP 105744 / CCUG 35717).